The following is a 222-amino-acid chain: GTP cyclohydrolase 1 (222 aa).

Positions 111, 114, and 182 each coordinate Zn(2+).

This sequence belongs to the GTP cyclohydrolase I family. In terms of assembly, toroid-shaped homodecamer, composed of two pentamers of five dimers.

It carries out the reaction GTP + H2O = 7,8-dihydroneopterin 3'-triphosphate + formate + H(+). The protein operates within cofactor biosynthesis; 7,8-dihydroneopterin triphosphate biosynthesis; 7,8-dihydroneopterin triphosphate from GTP: step 1/1. The protein is GTP cyclohydrolase 1 of Citrobacter koseri (strain ATCC BAA-895 / CDC 4225-83 / SGSC4696).